The sequence spans 305 residues: Tyrosine recombinase XerC (305 aa).

Residues 4–95 (ISIQELIKQW…TVKNFYKFLE (92 aa)) enclose the Core-binding (CB) domain. Residues 116–298 (LLPKALSVDD…SIKHLEAVYN (183 aa)) enclose the Tyr recombinase domain. Residues arginine 159, lysine 182, histidine 250, arginine 253, and histidine 276 contribute to the active site. Catalysis depends on tyrosine 285, which acts as the O-(3'-phospho-DNA)-tyrosine intermediate.

Belongs to the 'phage' integrase family. XerC subfamily. In terms of assembly, forms a cyclic heterotetrameric complex composed of two molecules of XerC and two molecules of XerD.

The protein localises to the cytoplasm. In terms of biological role, site-specific tyrosine recombinase, which acts by catalyzing the cutting and rejoining of the recombining DNA molecules. The XerC-XerD complex is essential to convert dimers of the bacterial chromosome into monomers to permit their segregation at cell division. It also contributes to the segregational stability of plasmids. The sequence is that of Tyrosine recombinase XerC from Rickettsia typhi (strain ATCC VR-144 / Wilmington).